The following is a 478-amino-acid chain: Aspartyl/glutamyl-tRNA(Asn/Gln) amidotransferase subunit B (478 aa).

It belongs to the GatB/GatE family. GatB subfamily. In terms of assembly, heterotrimer of A, B and C subunits.

It carries out the reaction L-glutamyl-tRNA(Gln) + L-glutamine + ATP + H2O = L-glutaminyl-tRNA(Gln) + L-glutamate + ADP + phosphate + H(+). The enzyme catalyses L-aspartyl-tRNA(Asn) + L-glutamine + ATP + H2O = L-asparaginyl-tRNA(Asn) + L-glutamate + ADP + phosphate + 2 H(+). Its function is as follows. Allows the formation of correctly charged Asn-tRNA(Asn) or Gln-tRNA(Gln) through the transamidation of misacylated Asp-tRNA(Asn) or Glu-tRNA(Gln) in organisms which lack either or both of asparaginyl-tRNA or glutaminyl-tRNA synthetases. The reaction takes place in the presence of glutamine and ATP through an activated phospho-Asp-tRNA(Asn) or phospho-Glu-tRNA(Gln). This chain is Aspartyl/glutamyl-tRNA(Asn/Gln) amidotransferase subunit B, found in Brevibacillus brevis (strain 47 / JCM 6285 / NBRC 100599).